The primary structure comprises 416 residues: Enterobactin exporter EntS (416 aa).

Topologically, residues 1–21 (MNKQSWLLNLSLLKTHPAFRA) are cytoplasmic. Residues 22–42 (VFLARFISIVSLGLLGVAVPV) traverse the membrane as a helical segment. Residues 43-55 (QIQMMTHSTWQVG) are Periplasmic-facing. The chain crosses the membrane as a helical span at residues 56-76 (LSVTLTGGAMFVGLMVGGVLA). The Cytoplasmic segment spans residues 77 to 83 (DRYERKK). The chain crosses the membrane as a helical span at residues 84 to 104 (VILLARGTCGIGFIGLCLNAL). The Periplasmic segment spans residues 105 to 109 (LPEPS). The helical transmembrane segment at 110–130 (LLAIYLLGLWDGFFASLGVTA) threads the bilayer. Residues 131–156 (LLAATPALVGRENLMQAGAITMLTVR) are Cytoplasmic-facing. A helical membrane pass occupies residues 157 to 177 (LGSVNSPMIGGLLLAIGGVAW). Residue Asn-178 is a topological domain, periplasmic. Residues 179 to 199 (YGLAAAGTFITLLPLLSLPAL) form a helical membrane-spanning segment. The Cytoplasmic portion of the chain corresponds to 200–218 (PPPPQPREHPLKSLLAGFR). The chain crosses the membrane as a helical span at residues 219-239 (FLLASPLVGGIALLGGLLTMA). The Periplasmic segment spans residues 240–256 (SAVRVLYPALADNWQMS). The chain crosses the membrane as a helical span at residues 257–277 (AAQIGFLYAAIPLGAAIGALT). Over 278-287 (SGKLAHSARP) the chain is Cytoplasmic. The chain crosses the membrane as a helical span at residues 288 to 307 (GLLMLLSTLGSFLAIGLFGL). Topologically, residues 308–313 (MPMWIL) are periplasmic. The chain crosses the membrane as a helical span at residues 314 to 336 (GVVCLALFGWLSAVSSLLQYTML). At 337–356 (QTQTPEVMLGRINGLWTAQN) the chain is on the cytoplasmic side. Residues 357-377 (VTGDAIGAALLGGLGAMMTPV) traverse the membrane as a helical segment. Residue Ala-378 is a topological domain, periplasmic. The chain crosses the membrane as a helical span at residues 379-399 (SASASGFGLLIIGVLLLLVLV). The Cytoplasmic portion of the chain corresponds to 400–416 (ELRHFRQTPPQVTASDS).

This sequence belongs to the major facilitator superfamily. EntS (TC 2.A.1.38) family.

The protein localises to the cell inner membrane. In terms of biological role, component of an export pathway for enterobactin. The protein is Enterobactin exporter EntS of Shigella dysenteriae serotype 1 (strain Sd197).